Reading from the N-terminus, the 247-residue chain is Cell division protein ZapD (247 aa).

The protein belongs to the ZapD family. As to quaternary structure, interacts with FtsZ.

It localises to the cytoplasm. In terms of biological role, cell division factor that enhances FtsZ-ring assembly. Directly interacts with FtsZ and promotes bundling of FtsZ protofilaments, with a reduction in FtsZ GTPase activity. In Citrobacter koseri (strain ATCC BAA-895 / CDC 4225-83 / SGSC4696), this protein is Cell division protein ZapD.